The following is a 124-amino-acid chain: Small ribosomal subunit protein uS12 (124 aa).

Asp89 is subject to 3-methylthioaspartic acid.

This sequence belongs to the universal ribosomal protein uS12 family. Part of the 30S ribosomal subunit. Contacts proteins S8 and S17. May interact with IF1 in the 30S initiation complex.

Functionally, with S4 and S5 plays an important role in translational accuracy. Interacts with and stabilizes bases of the 16S rRNA that are involved in tRNA selection in the A site and with the mRNA backbone. Located at the interface of the 30S and 50S subunits, it traverses the body of the 30S subunit contacting proteins on the other side and probably holding the rRNA structure together. The combined cluster of proteins S8, S12 and S17 appears to hold together the shoulder and platform of the 30S subunit. The sequence is that of Small ribosomal subunit protein uS12 from Klebsiella pneumoniae (strain 342).